We begin with the raw amino-acid sequence, 345 residues long: Protein Tob1 (345 aa).

The Bipartite nuclear localization signal motif lies at 22–39 (RRRVNIFGEELERLLKKK). Residues 82 to 92 (VRGNLPQDLSV) are important for nuclear localization. Positions 144-160 (DPASSVSSSPSPPFGHS) are enriched in low complexity. Residues 144-171 (DPASSVSSSPSPPFGHSAAVSPTFMPRS) are disordered. Residues 161–218 (AAVSPTFMPRSTQPLTFTTATFAATKFGSTKMKNSGRSNKVARTSPINLGLNVNDLLK) are required for interaction with CPEB3. Thr-204 carries the phosphothreonine modification. Residues 226–234 (MHSLYGLGL) carry the Nuclear export signal motif. The disordered stretch occupies residues 231–267 (GLGLGSQQQPQQQQQPAQPPPPPPPPQQQQQQKTSAL). Low complexity predominate over residues 237-246 (QQQPQQQQQP). Residues 247 to 257 (AQPPPPPPPPQ) show a composition bias toward pro residues.

This sequence belongs to the BTG family. As to quaternary structure, interacts with ERBB2. Interacts with CNOT7. Interacts with CPEB3 (via C-terminal RNA-binding region); recruits CNOT7 to CPEB3 to form a ternary complex required for mRNA deadenylation and decay. Interacts with CNOT8. Interacts with CPEB4. Phosphorylated on Ser and Thr residues. In terms of tissue distribution, ubiquitous.

The protein localises to the cytoplasm. It localises to the nucleus. In terms of biological role, anti-proliferative protein; the function is mediated by association with deadenylase subunits of the CCR4-NOT complex. Mediates CPEB3-accelerated mRNA deadenylation by binding to CPEB3 and recruiting CNOT7 which leads to target mRNA deadenylation and decay. The chain is Protein Tob1 (TOB1) from Homo sapiens (Human).